Reading from the N-terminus, the 151-residue chain is Ribonuclease H (151 aa).

Residues 1-143 (MYKKIEIFTD…CDQLARLAAK (143 aa)) form the RNase H type-1 domain. Residues aspartate 10, glutamate 48, aspartate 70, and aspartate 135 each coordinate Mg(2+).

It belongs to the RNase H family. Monomer. The cofactor is Mg(2+).

Its subcellular location is the cytoplasm. The enzyme catalyses Endonucleolytic cleavage to 5'-phosphomonoester.. Its function is as follows. Endonuclease that specifically degrades the RNA of RNA-DNA hybrids. In Blochmanniella pennsylvanica (strain BPEN), this protein is Ribonuclease H.